The primary structure comprises 399 residues: Bone morphogenetic protein 8A (399 aa).

Positions 1–19 (MAMRPGPLWLLGLALCALG) are cleaved as a signal peptide. The propeptide occupies 20 to 260 (GGHGPRPPHT…ASQSPVRAPR (241 aa)). N-linked (GlcNAc...) asparagine glycosylation is present at Asn155. The segment at 257–286 (RAPRAARPLKRRQPKKTNELPHPNKLPGIF) is disordered. Cystine bridges form between Cys298/Cys364, Cys327/Cys396, and Cys331/Cys398. Asn340 carries N-linked (GlcNAc...) asparagine glycosylation.

This sequence belongs to the TGF-beta family. In terms of assembly, homodimer; disulfide-linked. In terms of tissue distribution, expressed in testis. expressed in trophoblast cells of the labyrinthine region of the placenta and in the inner root sheath of hair follicles of early postnatal skin. Expressed predominantly in the neonatal mouse spermatogonia.

The protein localises to the secreted. Its function is as follows. Growth factor of the TGF-beta superfamily that plays important role in various biological processes, including spermatogenesis, osteogenesis, steroidogenesis as well as regulation of energy balance. Initiates the canonical BMP signaling cascade by associating with type I receptor BMPR1A and type II receptor BMPR2. Once all three components are bound together in a complex at the cell surface, BMPR2 phosphorylates and activates BMPR1A. In turn, BMPR1A propagates signal by phosphorylating SMAD1/5/8 that travel to the nucleus and act as activators and repressors of transcription of target genes. In addition, activates the SMAD2/3 pathway. In Mus musculus (Mouse), this protein is Bone morphogenetic protein 8A (Bmp8a).